The chain runs to 357 residues: DNA replication and repair protein RecF (357 aa).

30 to 37 (GANGSGKT) serves as a coordination point for ATP.

Belongs to the RecF family.

The protein resides in the cytoplasm. In terms of biological role, the RecF protein is involved in DNA metabolism; it is required for DNA replication and normal SOS inducibility. RecF binds preferentially to single-stranded, linear DNA. It also seems to bind ATP. The chain is DNA replication and repair protein RecF from Klebsiella pneumoniae subsp. pneumoniae (strain ATCC 700721 / MGH 78578).